The sequence spans 181 residues: Transmembrane protein 47 (181 aa).

Ala-2 bears the N-acetylalanine mark. 4 helical membrane-spanning segments follow: residues 21 to 41 (LVGL…VLSP), 83 to 103 (ALLL…LISI), 115 to 135 (VAVM…LYPI), and 152 to 172 (GYGL…LYCL).

It belongs to the TMEM47 family. In terms of assembly, interacts with CTNNB1, CTNNA1, PRKCI, PARD6B. Interacts with FYB1. As to expression, expressed in podocytes (at protein level).

It localises to the membrane. The protein localises to the cell junction. Its subcellular location is the adherens junction. Regulates cell junction organization in epithelial cells. May play a role in the transition from adherens junction to tight junction assembly. May regulate F-actin polymerization required for tight junctional localization dynamics and affect the junctional localization of PARD6B. During podocyte differentiation may negatively regulate activity of FYN and subsequently the abundance of nephrin. The protein is Transmembrane protein 47 (Tmem47) of Mus musculus (Mouse).